The following is a 254-amino-acid chain: DNA repair protein RecO (254 aa).

It belongs to the RecO family.

Involved in DNA repair and RecF pathway recombination. This chain is DNA repair protein RecO, found in Verminephrobacter eiseniae (strain EF01-2).